The primary structure comprises 121 residues: UPF0344 protein BCG9842_B4136 (121 aa).

A run of 4 helical transmembrane segments spans residues 6-26 (ITAW…YSAG), 38-58 (LMYI…VKTA), 65-85 (WYGL…MVLV), and 92-112 (PTGA…YLGL).

It belongs to the UPF0344 family.

The protein resides in the cell membrane. This chain is UPF0344 protein BCG9842_B4136, found in Bacillus cereus (strain G9842).